The following is a 484-amino-acid chain: MTKEQQLAERIIAAVGGMDNIDSVMNCMTRVRIKVLDENKVDDQELRHIDGVMGVIHDERIQVVVGPGTVNKVANHMAELSGVKLGDPIPHNHNDSEKMDYKSYAADKAKANKEAHKAKQKNGKLNKVLKSIANIFIPLIPAFIGAGLIGGIAAVLSNLMVAGYISGAWITQLITVFNVIKDGMLAYLAIFTGINAAKEFGATPGLGGVIGGTTLLTGIAGKNILMNVFTGEPLQPGQGGIIGVIFAVWILSIVEKRLHKIVPNAIDIIVTPAIALLIVGLLTIFIFMPLAGFVSDSLVSVVNGIISIGGVFSGFIIGASFLPLVMLGLHHIFTPIHIEMINQSGATYLLPIAAMAGAGQVGAALALWVRCKRNTTLRNTLKGALPVGFLGIGEPLIYGVTLPLGRPFLTACIGGGIGGAVIGGIGHIGAKAIGPSGVSLLPLISDNMYLGYIAGLLTAYAGGFVCTYLFGTTKAMRQTDLLGD.

The PTS EIIB type-1 domain maps to Q5–D87. C27 (phosphocysteine intermediate; for EIIB activity) is an active-site residue. The PTS EIIC type-1 domain occupies K130–D484. The next 10 membrane-spanning stretches (helical) occupy residues I135–V155, M160–I180, F200–A220, L234–V254, I274–V294, I305–V325, L349–V369, A384–L404, F408–I428, and L450–F470.

It is found in the cell membrane. It catalyses the reaction N-acetyl-beta-D-muramate-(1-&gt;4)-N-acetyl-D-glucosamine(out) + N(pros)-phospho-L-histidyl-[protein] = 6-phospho-N-acetyl-beta-D-muramate-(1-&gt;4)-N-acetyl-D-glucosamine(in) + L-histidyl-[protein]. The protein operates within cell wall biogenesis; peptidoglycan recycling. Functionally, the phosphoenolpyruvate-dependent sugar phosphotransferase system (sugar PTS), a major carbohydrate active transport system, catalyzes the phosphorylation of incoming sugar substrates concomitantly with their translocation across the cell membrane. This system is involved in the uptake and phosphorylation of MurNAc-GlcNAc, the principle peptidoglycan turnover product of S.aureus, yielding cytoplasmic MurNAc 6P-GlcNAc. In Staphylococcus aureus (strain bovine RF122 / ET3-1), this protein is PTS system MurNAc-GlcNAc-specific EIIBC component.